Consider the following 706-residue polypeptide: Glycine--tRNA ligase beta subunit (706 aa).

It belongs to the class-II aminoacyl-tRNA synthetase family. As to quaternary structure, tetramer of two alpha and two beta subunits.

It is found in the cytoplasm. It catalyses the reaction tRNA(Gly) + glycine + ATP = glycyl-tRNA(Gly) + AMP + diphosphate. The protein is Glycine--tRNA ligase beta subunit of Hyphomonas neptunium (strain ATCC 15444).